The sequence spans 153 residues: Transcriptional repressor NrdR (153 aa).

The segment at 1-20 (MKCPFCNSADTRVKNSRHSD) is disordered. The segment at 3–34 (CPFCNSADTRVKNSRHSDDNMSVRRRRLCEVC) is a zinc-finger region. Positions 11–20 (TRVKNSRHSD) are enriched in basic and acidic residues. Residues 49 to 139 (IMVLKKDGRM…VYMDFSDADD (91 aa)) enclose the ATP-cone domain.

The protein belongs to the NrdR family. Zn(2+) serves as cofactor.

Functionally, negatively regulates transcription of bacterial ribonucleotide reductase nrd genes and operons by binding to NrdR-boxes. This chain is Transcriptional repressor NrdR, found in Anaplasma phagocytophilum (strain HZ).